Reading from the N-terminus, the 316-residue chain is Retron Ec73 putative ribosyltransferase/DNA-binding protein (316 aa).

Its function is as follows. Possible ribosyltransferase/DNA-binding component of antiviral defense system retron Ec73, composed of a non-coding RNA (ncRNA) followed by this protein then a reverse transcriptase (RT). Expression of this retron confers protection against bacteriophages SECphi4, SECphi6, SECphi27 and P1. At multiplicity of infection (MOI) of 0.02 cultures grow normally when infected with SECphi4 without collapsing, at MOI 2 cultures enter growth stasis. This Escherichia coli protein is Retron Ec73 putative ribosyltransferase/DNA-binding protein.